The following is a 131-amino-acid chain: Calvin cycle protein CP12-2, chloroplastic (131 aa).

Residues 1 to 53 constitute a chloroplast transit peptide; that stretch reads MATIATGLNIATQRVFVTSENRPVCLAGPVHLNNSWNLGSRTTNRMMKLQPIK. 2 disulfides stabilise this stretch: Cys75–Cys84 and Cys117–Cys126. The tract at residues 97 to 131 is disordered; that stretch reads AASHARDKKKADGSDPLEEYCKDNPETNECRTYDN. Positions 105 to 131 are enriched in basic and acidic residues; the sequence is KKADGSDPLEEYCKDNPETNECRTYDN.

The protein belongs to the CP12 family. As to quaternary structure, monomer. Component of a complex that contains two dimers of PRK, two tetramers of GAPDH and CP12. CP12 associates with GAPDH, causing its conformation to change. This GAPDH/CP12 complex binds PRK to form a half-complex (one unit). This unit probably dimerizes due partially to interactions between the enzymes of each unit. Contains two disulfide bonds; only the oxidized protein, with two disulfide bonds, is active in complex formation. The C-terminal disulfide is involved in the interaction with GAPDH and the N-terminal disulfide mediates the binding of PRK with this binary complex. In terms of tissue distribution, mostly expressed in cotyledons, leaves and flower stalks, and, to a lower extent, in flowers and stems. Barely detectable in roots and siliques.

It localises to the plastid. It is found in the chloroplast. In terms of biological role, acts as a linker essential in the assembly of a core complex of PRK/GAPDH. Coordinates the reversible inactivation of chloroplast enzymes GAPDH and PRK during darkness in photosynthetic tissues. This chain is Calvin cycle protein CP12-2, chloroplastic (CP12-2), found in Arabidopsis thaliana (Mouse-ear cress).